Consider the following 139-residue polypeptide: 3-hydroxyacyl-[acyl-carrier-protein] dehydratase FabZ (139 aa).

His-46 is an active-site residue.

Belongs to the thioester dehydratase family. FabZ subfamily.

It is found in the cytoplasm. The catalysed reaction is a (3R)-hydroxyacyl-[ACP] = a (2E)-enoyl-[ACP] + H2O. In terms of biological role, involved in unsaturated fatty acids biosynthesis. Catalyzes the dehydration of short chain beta-hydroxyacyl-ACPs and long chain saturated and unsaturated beta-hydroxyacyl-ACPs. This is 3-hydroxyacyl-[acyl-carrier-protein] dehydratase FabZ from Streptococcus pyogenes serotype M3 (strain ATCC BAA-595 / MGAS315).